A 543-amino-acid chain; its full sequence is EH domain-containing protein 2 (543 aa).

Phosphoserine occurs at positions 3 and 44. Residues 55-286 (FDGKPMVLVA…DLFRDIQGLP (232 aa)) enclose the Dynamin-type G domain. Residues 65-72 (GQYSTGKT) form a G1 motif region. 65-72 (GQYSTGKT) serves as a coordination point for ATP. The interval 91-92 (EP) is G2 motif. Positions 153–156 (DTPG) are G3 motif. A G4 motif region spans residues 219–222 (NKAD). Lys-220 contacts ATP. Residue Val-243 is a region of interest, G5 motif. An ATP-binding site is contributed by Trp-258. A mediates membrane-binding region spans residues 320-340 (TVFGKENKKKQLILKLPVIFA). Ser-438, Ser-468, Ser-470, Ser-484, and Ser-493 each carry phosphoserine. An EH domain is found at 449 to 537 (DKSKYDEIFY…RRLVPPSKRR (89 aa)). In terms of domain architecture, EF-hand spans 481-516 (LPNSVLGRIWKLSDVDRDGMLDDEEFALASHLIEAK). 5 residues coordinate Ca(2+): Asp-494, Asp-496, Asp-498, Met-500, and Glu-505. The disordered stretch occupies residues 521–543 (GLPTNLPRRLVPPSKRRQKGSAE). Residues 534 to 543 (SKRRQKGSAE) show a composition bias toward basic residues.

It belongs to the TRAFAC class dynamin-like GTPase superfamily. Dynamin/Fzo/YdjA family. EHD subfamily. In terms of assembly, homodimer and homooligomer. Interacts with EHD1. May also interact with EHD3 and EHD4. Interacts with MYOF. Interacts with EHBP1. Interacts with FER1L5 (via second C2 domain). Interacts with CAV1 in a cholesterol-dependent manner. Interacts (via EH domain) with PACSIN2 (via NPF motifs); this interaction probably stabilizes the caveolae. In terms of tissue distribution, detected in lung and adipocytes. Detected at lower levels in heart and skeletal muscle.

The protein resides in the cell membrane. It localises to the membrane. It is found in the caveola. Its subcellular location is the endosome membrane. The protein localises to the cytoplasm. The protein resides in the cytosol. Its activity is regulated as follows. The very low intrinsic ATPase activity is increased upon interaction with liposomes. ATP- and membrane-binding protein that controls membrane reorganization/tubulation upon ATP hydrolysis. Plays a role in membrane trafficking between the plasma membrane and endosomes. Important for the internalization of GLUT4. Required for fusion of myoblasts to skeletal muscle myotubes. Required for normal translocation of FER1L5 to the plasma membrane. Regulates the equilibrium between cell surface-associated and cell surface-dissociated caveolae by constraining caveolae at the cell membrane. In Mus musculus (Mouse), this protein is EH domain-containing protein 2.